Reading from the N-terminus, the 315-residue chain is Ribosomal RNA small subunit methyltransferase H (315 aa).

Residues 35 to 37, D55, F79, D101, and Q108 contribute to the S-adenosyl-L-methionine site; that span reads GGH.

It belongs to the methyltransferase superfamily. RsmH family.

The protein localises to the cytoplasm. The enzyme catalyses cytidine(1402) in 16S rRNA + S-adenosyl-L-methionine = N(4)-methylcytidine(1402) in 16S rRNA + S-adenosyl-L-homocysteine + H(+). Its function is as follows. Specifically methylates the N4 position of cytidine in position 1402 (C1402) of 16S rRNA. The polypeptide is Ribosomal RNA small subunit methyltransferase H (Photobacterium profundum (strain SS9)).